The following is a 571-amino-acid chain: Cilia- and flagella-associated protein 52 (571 aa).

WD repeat units lie at residues 62–106 (GHGN…LLAR), 109–150 (LHKG…AICG), 156–195 (LNVG…RKIW), 288–327 (QSQG…ETLI), 330–364 (CHFE…TSSN), 366–405 (AHRI…QKLE), 410–449 (EHKS…RNQM), 451–490 (LANT…VIRE), 494–533 (SLSG…VTHV), and 536–571 (GHSG…PYTS).

The protein belongs to the CFAP52 family. As to quaternary structure, microtubule inner protein component of sperm flagellar doublet microtubules. Interacts with BRCA2. Interacts with the CCT chaperonin complex. Interacts with HSP70. Interacts with AK8. Interacts with CFAP45. Interacts with DNAI1. Interacts with IQDC.

Its subcellular location is the cytoplasm. It is found in the cytoskeleton. It localises to the cilium axoneme. The protein localises to the flagellum axoneme. Microtubule inner protein (MIP) part of the dynein-decorated doublet microtubules (DMTs) in cilia axoneme. Important for proper ciliary and flagellar beating. May act in cooperation with CFAP45 and axonemal dynein subunit DNAH11. May play a role in cell growth and/or survival. In Macaca fascicularis (Crab-eating macaque), this protein is Cilia- and flagella-associated protein 52.